A 477-amino-acid polypeptide reads, in one-letter code: Putative WAS protein family homolog 4 (477 aa).

Residues 1 to 180 are WHD1; the sequence is MSGVMCLKAS…EGLGGLPSNI (180 aa). Disordered regions lie at residues 310 to 420 and 434 to 477; these read QDGV…QGGH and KGIS…DWES. A compositionally biased stretch (pro residues) spans 315–327; sequence TPPPPPPPPPPAP. The VCA stretch occupies residues 362–477; it reads QGAPREVVDP…QAEDEDDWES (116 aa). Residues 374–396 enclose the WH2 domain; sequence GWATLLESIRQAGGIGKAKLRSM. Positions 395–411 are enriched in basic and acidic residues; it reads SMKERKLEKQQQKEQEQ. A compositionally biased stretch (gly residues) spans 437 to 449; it reads SGKGPGAGDGPGG.

The protein belongs to the WASH1 family. Interacts (via WHD1 region) with WASHC2C; the interaction is direct.

The protein resides in the early endosome membrane. It localises to the recycling endosome membrane. In terms of biological role, may act as a nucleation-promoting factor at the surface of endosomes, where it recruits and activates the Arp2/3 complex to induce actin polymerization, playing a key role in the fission of tubules that serve as transport intermediates during endosome sorting. This Homo sapiens (Human) protein is Putative WAS protein family homolog 4 (WASH4P).